A 205-amino-acid polypeptide reads, in one-letter code: Putative 3-methyladenine DNA glycosylase (205 aa).

The protein belongs to the DNA glycosylase MPG family.

The polypeptide is Putative 3-methyladenine DNA glycosylase (Bacillus anthracis (strain A0248)).